Reading from the N-terminus, the 382-residue chain is uncharacterized protein (382 aa).

12 helical membrane passes run 14–34 (GLLL…LWLA), 45–65 (MVSS…GYLI), 79–99 (LVFA…SWMA), 102–122 (FVAG…LMCS), 131–151 (LLAA…LLVS), 157–177 (LMNV…PLLF), 204–224 (LGVN…GLMP), 236–256 (NIGF…WPIG), 265–285 (LLVL…MLTH), 289–309 (APAL…AMAW), 325–345 (ALLL…AMLM), and 349–369 (SDNL…LMLL).

This sequence belongs to the major facilitator superfamily. YcaD (TC 2.A.1.26) family.

The protein resides in the cell inner membrane. This is an uncharacterized protein from Escherichia fergusonii (strain ATCC 35469 / DSM 13698 / CCUG 18766 / IAM 14443 / JCM 21226 / LMG 7866 / NBRC 102419 / NCTC 12128 / CDC 0568-73).